Reading from the N-terminus, the 98-residue chain is NADH-ubiquinone oxidoreductase chain 4L (98 aa).

3 consecutive transmembrane segments (helical) span residues 1-21 (MTLIHMNILMAFSMSLVGLLM), 29-49 (ALLCLEGMMLSLFVLATLTIL), and 61-81 (IILLVFAACEAAIGLALLVMV).

It belongs to the complex I subunit 4L family. Core subunit of respiratory chain NADH dehydrogenase (Complex I) which is composed of 45 different subunits.

The protein resides in the mitochondrion inner membrane. The catalysed reaction is a ubiquinone + NADH + 5 H(+)(in) = a ubiquinol + NAD(+) + 4 H(+)(out). Its function is as follows. Core subunit of the mitochondrial membrane respiratory chain NADH dehydrogenase (Complex I) which catalyzes electron transfer from NADH through the respiratory chain, using ubiquinone as an electron acceptor. Part of the enzyme membrane arm which is embedded in the lipid bilayer and involved in proton translocation. This chain is NADH-ubiquinone oxidoreductase chain 4L (MT-ND4L), found in Balaenoptera bonaerensis (Antarctic minke whale).